The following is a 722-amino-acid chain: BTB/POZ domain-containing protein 9 (722 aa).

The 67-residue stretch at 46 to 112 (ADVEFIVEEE…IYSGTLLLST (67 aa)) folds into the BTB domain. The BACK domain maps to 151-247 (CMILDAARLY…MNLEHLLQVV (97 aa)). Residues 565-593 (QDKNYLKKIADMEKEREKREKEKKTAKTD) are a coiled coil. Basic and acidic residues predominate over residues 577–594 (EKEREKREKEKKTAKTDD). 2 disordered regions span residues 577-626 (EKER…VLRS) and 640-722 (PLTP…RETL). The span at 597–606 (IASTSGSSLA) shows a compositional bias: polar residues. Low complexity predominate over residues 607–626 (SGHAESPSTSSSSSQSVLRS). The span at 641–658 (LTPPALSPPGTPALPAPL) shows a compositional bias: pro residues. Residues 670–679 (EQNQPSNISA) are compositionally biased toward polar residues. Residues 686-704 (SPSSRSNPSPSLSRSRSQS) are compositionally biased toward low complexity.

In terms of tissue distribution, detected in the brain (at protein level).

It localises to the cytoplasm. Its function is as follows. Essential for the homeostatic regulation of sleep and motor activity, by depressing hyperactivity and wakefulness. May function, at least in part, by ensuring dopamine biosynthesis. The chain is BTB/POZ domain-containing protein 9 from Drosophila melanogaster (Fruit fly).